Reading from the N-terminus, the 548-residue chain is Zinc metalloproteinase dpy-31 (548 aa).

Positions 1-24 (MSLLRSASLLLVVVTAALPPCTLG) are cleaved as a signal peptide. Positions 25 to 150 (YSLHDGSRLD…KTGQRRVKRK (126 aa)) are excised as a propeptide. The 200-residue stretch at 150–349 (KFIGSDLRRW…IRLMNKIYCS (200 aa)) folds into the Peptidase M12A domain. Asn190 carries an N-linked (GlcNAc...) asparagine glycan. Cystine bridges form between Cys193–Cys348, Cys216–Cys237, Cys352–Cys372, Cys374–Cys383, and Cys394–Cys422. His245 contacts Zn(2+). Glu246 is a catalytic residue. 2 residues coordinate Zn(2+): His249 and His255. The 41-residue stretch at 344-384 (NKIYCSNVCSRKLPCQRGGYTDPRRCDRCRCPDGFTGQFCE) folds into the EGF-like domain. Residues 394 to 510 (CGGRIQVNSG…RGFEARARAL (117 aa)) form the CUB domain. Residue Asn461 is glycosylated (N-linked (GlcNAc...) asparagine). The TSP type-1 domain occupies 513 to 547 (NGQWASWTPWTPCTASCGACGSRMRTRVCPHGACP). Disulfide bonds link Cys525–Cys546, Cys529–Cys546, and Cys541–Cys546.

It depends on Zn(2+) as a cofactor.

The protein localises to the secreted. Its function is as follows. Metalloprotease which cleaves the carboxyl terminus of procollagens to mature collagens. Probably involved in cuticular collagen maturation. The chain is Zinc metalloproteinase dpy-31 from Haemonchus contortus (Barber pole worm).